Consider the following 505-residue polypeptide: 2,3-bisphosphoglycerate-independent phosphoglycerate mutase (505 aa).

2 residues coordinate Mn(2+): Asp-13 and Ser-63. The active-site Phosphoserine intermediate is Ser-63. Residues His-124, 153 to 154 (RD), Arg-183, Arg-189, 254 to 257 (RADR), and Lys-329 contribute to the substrate site. Mn(2+) contacts are provided by Asp-395, His-399, Asp-436, His-437, and His-455.

It belongs to the BPG-independent phosphoglycerate mutase family. Monomer. Mn(2+) serves as cofactor.

It carries out the reaction (2R)-2-phosphoglycerate = (2R)-3-phosphoglycerate. It functions in the pathway carbohydrate degradation; glycolysis; pyruvate from D-glyceraldehyde 3-phosphate: step 3/5. Its function is as follows. Catalyzes the interconversion of 2-phosphoglycerate and 3-phosphoglycerate. This chain is 2,3-bisphosphoglycerate-independent phosphoglycerate mutase, found in Agrobacterium fabrum (strain C58 / ATCC 33970) (Agrobacterium tumefaciens (strain C58)).